The following is a 305-amino-acid chain: Ornithine carbamoyltransferase (305 aa).

Carbamoyl phosphate is bound by residues 48 to 51 (STRT), Arg-99, and 126 to 129 (HPCQ). L-ornithine-binding positions include Asn-157, Asp-222, and 226 to 227 (SM). Carbamoyl phosphate-binding positions include 262–263 (CL) and Arg-290.

This sequence belongs to the aspartate/ornithine carbamoyltransferase superfamily. OTCase family.

It is found in the cytoplasm. It catalyses the reaction carbamoyl phosphate + L-ornithine = L-citrulline + phosphate + H(+). The protein operates within amino-acid biosynthesis; L-arginine biosynthesis; L-arginine from L-ornithine and carbamoyl phosphate: step 1/3. Reversibly catalyzes the transfer of the carbamoyl group from carbamoyl phosphate (CP) to the N(epsilon) atom of ornithine (ORN) to produce L-citrulline. The polypeptide is Ornithine carbamoyltransferase (argF) (Methanocaldococcus jannaschii (strain ATCC 43067 / DSM 2661 / JAL-1 / JCM 10045 / NBRC 100440) (Methanococcus jannaschii)).